Reading from the N-terminus, the 918-residue chain is Translation initiation factor IF-2 (918 aa).

The interval 39-321 is disordered; that stretch reads DDASEKHLRN…KRDGRMKETT (283 aa). The segment covering 95–146 has biased composition (low complexity); the sequence is KSSNNESTTRNNNNNKNGNQNRNNTNGRPNNNQNRPNNNRNQNNNRNGNRPN. The segment covering 148-158 has biased composition (basic and acidic residues); the sequence is PKRDEKQDRIR. The span at 159–174 shows a compositional bias: low complexity; the sequence is ASVAEAARMAAQANRE. Residues 180-190 show a composition bias toward polar residues; it reads PQANRQRTNSA. Low complexity-rich tracts occupy residues 201-231, 237-267, and 278-296; these read NNQN…NNRN, SRPN…TANN, and GRNN…QNRP. Basic residues predominate over residues 302–313; sequence RKNKKRNRKAKR. The tr-type G domain occupies 419–588; sequence SRPPVVTIMG…LLQAEVLELK (170 aa). A G1 region spans residues 428–435; sequence GHVDHGKT. A GTP-binding site is contributed by 428-435; it reads GHVDHGKT. Positions 453 to 457 are G2; it reads GITQG. Residues 474–477 are G3; sequence DTPG. GTP is bound by residues 474–478 and 528–531; these read DTPGH and NKID. Residues 528-531 are G4; it reads NKID. The tract at residues 564–566 is G5; the sequence is SAK.

It belongs to the TRAFAC class translation factor GTPase superfamily. Classic translation factor GTPase family. IF-2 subfamily.

It localises to the cytoplasm. Functionally, one of the essential components for the initiation of protein synthesis. Protects formylmethionyl-tRNA from spontaneous hydrolysis and promotes its binding to the 30S ribosomal subunits. Also involved in the hydrolysis of GTP during the formation of the 70S ribosomal complex. The chain is Translation initiation factor IF-2 from Pediococcus pentosaceus (strain ATCC 25745 / CCUG 21536 / LMG 10740 / 183-1w).